The following is a 364-amino-acid chain: UDP-N-acetylglucosamine--N-acetylmuramyl-(pentapeptide) pyrophosphoryl-undecaprenol N-acetylglucosamine transferase (364 aa).

UDP-N-acetyl-alpha-D-glucosamine contacts are provided by residues 16–18 (TGG), asparagine 128, arginine 166, serine 195, isoleucine 249, and glutamine 294.

Belongs to the glycosyltransferase 28 family. MurG subfamily.

The protein resides in the cell inner membrane. It catalyses the reaction di-trans,octa-cis-undecaprenyl diphospho-N-acetyl-alpha-D-muramoyl-L-alanyl-D-glutamyl-meso-2,6-diaminopimeloyl-D-alanyl-D-alanine + UDP-N-acetyl-alpha-D-glucosamine = di-trans,octa-cis-undecaprenyl diphospho-[N-acetyl-alpha-D-glucosaminyl-(1-&gt;4)]-N-acetyl-alpha-D-muramoyl-L-alanyl-D-glutamyl-meso-2,6-diaminopimeloyl-D-alanyl-D-alanine + UDP + H(+). Its pathway is cell wall biogenesis; peptidoglycan biosynthesis. Cell wall formation. Catalyzes the transfer of a GlcNAc subunit on undecaprenyl-pyrophosphoryl-MurNAc-pentapeptide (lipid intermediate I) to form undecaprenyl-pyrophosphoryl-MurNAc-(pentapeptide)GlcNAc (lipid intermediate II). The chain is UDP-N-acetylglucosamine--N-acetylmuramyl-(pentapeptide) pyrophosphoryl-undecaprenol N-acetylglucosamine transferase from Chromohalobacter salexigens (strain ATCC BAA-138 / DSM 3043 / CIP 106854 / NCIMB 13768 / 1H11).